Here is a 180-residue protein sequence, read N- to C-terminus: Peptide deformylase (180 aa).

Residues Cys-96 and His-138 each contribute to the Fe cation site. Glu-139 is a catalytic residue. His-142 contacts Fe cation.

This sequence belongs to the polypeptide deformylase family. Fe(2+) serves as cofactor.

It carries out the reaction N-terminal N-formyl-L-methionyl-[peptide] + H2O = N-terminal L-methionyl-[peptide] + formate. Functionally, removes the formyl group from the N-terminal Met of newly synthesized proteins. Requires at least a dipeptide for an efficient rate of reaction. N-terminal L-methionine is a prerequisite for activity but the enzyme has broad specificity at other positions. The chain is Peptide deformylase from Rhodopseudomonas palustris (strain BisA53).